The chain runs to 195 residues: HTH-type transcriptional regulator BetI (195 aa).

The HTH tetR-type domain maps to 8-68; sequence SIRRRQLIDA…ATMRDITSQL (61 aa). Residues 31–50 constitute a DNA-binding region (H-T-H motif); sequence TIAQIARRAGVSTGIISHYF.

It participates in amine and polyamine biosynthesis; betaine biosynthesis via choline pathway [regulation]. Its function is as follows. Repressor involved in the biosynthesis of the osmoprotectant glycine betaine. It represses transcription of the choline transporter BetT and the genes of BetAB involved in the synthesis of glycine betaine. This chain is HTH-type transcriptional regulator BetI, found in Escherichia coli (strain K12 / DH10B).